We begin with the raw amino-acid sequence, 301 residues long: Formylmethanofuran--tetrahydromethanopterin formyltransferase (301 aa).

The protein belongs to the FTR family. Homotetramer.

Its subcellular location is the cytoplasm. The enzyme catalyses N-formylmethanofuran + 5,6,7,8-tetrahydromethanopterin + H(+) = N(5)-formyl-5,6,7,8-tetrahydromethanopterin + methanofuran. It functions in the pathway one-carbon metabolism; methanogenesis from CO(2); 5,10-methenyl-5,6,7,8-tetrahydromethanopterin from CO(2): step 2/3. In terms of biological role, catalyzes the reversible transfer of a formyl group from formylmethanofuran (formyl-MFR) to tetrahydromethanopterin (H(4)MPT) to produce 5-formyl tetrahydromethanopterin (5-formyl-H(4)MPT) and methanofuran (MFR). In Methanocaldococcus jannaschii (strain ATCC 43067 / DSM 2661 / JAL-1 / JCM 10045 / NBRC 100440) (Methanococcus jannaschii), this protein is Formylmethanofuran--tetrahydromethanopterin formyltransferase.